The primary structure comprises 145 residues: Mannitol-specific phosphotransferase enzyme IIA component (145 aa).

Residues 2-145 (ENLTNISIEL…EEITENLAIA (144 aa)) form the PTS EIIA type-2 domain. The Tele-phosphohistidine intermediate role is filled by His-62. The residue at position 62 (His-62) is a Phosphohistidine; by HPr.

The protein localises to the cytoplasm. In terms of biological role, the phosphoenolpyruvate-dependent sugar phosphotransferase system (sugar PTS), a major carbohydrate active transport system, catalyzes the phosphorylation of incoming sugar substrates concomitantly with their translocation across the cell membrane. The enzyme II CmtAB PTS system is involved in D-mannitol transport. This Enterococcus faecalis (strain ATCC 700802 / V583) protein is Mannitol-specific phosphotransferase enzyme IIA component.